A 408-amino-acid polypeptide reads, in one-letter code: LL-diaminopimelate aminotransferase (408 aa).

Substrate is bound by residues Y15 and G42. Pyridoxal 5'-phosphate-binding positions include Y72, 108–109 (SK), Y132, N187, Y218, and 246–248 (SFS). Positions 109, 132, and 187 each coordinate substrate. K249 carries the post-translational modification N6-(pyridoxal phosphate)lysine. Pyridoxal 5'-phosphate-binding residues include R257 and N292. Substrate contacts are provided by N292 and R388.

It belongs to the class-I pyridoxal-phosphate-dependent aminotransferase family. LL-diaminopimelate aminotransferase subfamily. Homodimer. It depends on pyridoxal 5'-phosphate as a cofactor.

The enzyme catalyses (2S,6S)-2,6-diaminopimelate + 2-oxoglutarate = (S)-2,3,4,5-tetrahydrodipicolinate + L-glutamate + H2O + H(+). Its pathway is amino-acid biosynthesis; L-lysine biosynthesis via DAP pathway; LL-2,6-diaminopimelate from (S)-tetrahydrodipicolinate (aminotransferase route): step 1/1. Its function is as follows. Involved in the synthesis of meso-diaminopimelate (m-DAP or DL-DAP), required for both lysine and peptidoglycan biosynthesis. Catalyzes the direct conversion of tetrahydrodipicolinate to LL-diaminopimelate. The sequence is that of LL-diaminopimelate aminotransferase from Prochlorococcus marinus subsp. pastoris (strain CCMP1986 / NIES-2087 / MED4).